The primary structure comprises 309 residues: Acetylglutamate kinase (309 aa).

Residues glycine 69–glycine 70, arginine 91, and asparagine 194 each bind substrate.

It belongs to the acetylglutamate kinase family. ArgB subfamily.

The protein resides in the cytoplasm. The enzyme catalyses N-acetyl-L-glutamate + ATP = N-acetyl-L-glutamyl 5-phosphate + ADP. Its pathway is amino-acid biosynthesis; L-arginine biosynthesis; N(2)-acetyl-L-ornithine from L-glutamate: step 2/4. Its function is as follows. Catalyzes the ATP-dependent phosphorylation of N-acetyl-L-glutamate. This is Acetylglutamate kinase from Vesicomyosocius okutanii subsp. Calyptogena okutanii (strain HA).